The primary structure comprises 201 residues: Ras-related protein Rab-1B (201 aa).

Residue Met-1 is modified to N-acetylmethionine. Residues Ser-17, Gly-18, Val-19, Gly-20, Lys-21, Ser-22, Cys-23, Tyr-33, Thr-34, Glu-35, Ser-36, Ser-39, and Thr-40 each contribute to the GTP site. Ser-22 serves as a coordination point for Mg(2+). The short motif at 30–45 is the Switch 1 element; that stretch reads DDTYTESYISTIGVDF. Positions 40 and 63 each coordinate Mg(2+). The tract at residues 64–83 is switch 2 region; required for interaction with REP1/CHM; the sequence is TAGQERFRTITSSYYRGAHG. The Switch 2 motif lies at 65–80; that stretch reads AGQERFRTITSSYYRG. Gly-66, Asn-121, Lys-122, Asp-124, Ser-151, Ala-152, and Lys-153 together coordinate GTP. Residues 174-201 form a disordered region; the sequence is GPGAASGGERPNLKIDSTPVKPASGGCC. 2 S-geranylgeranyl cysteine lipidation sites follow: Cys-200 and Cys-201. Cys-201 bears the Cysteine methyl ester mark.

This sequence belongs to the small GTPase superfamily. Rab family. As to quaternary structure, interacts with MICAL1 and MICAL2. Interacts (GTP-bound form) with MICALCL, MICAL1 and MILCAL3. Interacts with GDI1; the interaction requires the GDP-bound state. Interacts with CHM/REP1; the interaction requires the GDP-bound form and is necessary for prenylation by GGTase II. Interacts with RabGAP TBC1D20. Interacts (in GDP-bound form) with lipid phosphatase MTMR6 (via GRAM domain); the interaction regulates MTMR6 recruitment to the endoplasmic reticulum-Golgi intermediate compartment. Interacts (in GDP-bound form) with lipid phosphatase MTMR7. Mg(2+) is required as a cofactor. Post-translationally, prenylated; by GGTase II, only after interaction of the substrate with Rab escort protein 1 (REP1).

Its subcellular location is the cytoplasm. The protein localises to the membrane. It localises to the preautophagosomal structure membrane. The protein resides in the perinuclear region. The enzyme catalyses GTP + H2O = GDP + phosphate + H(+). Regulated by guanine nucleotide exchange factors (GEFs) which promote the exchange of bound GDP for free GTP. Regulated by GTPase activating proteins (GAPs) including TBC1D20 which increases the GTP hydrolysis activity. Inhibited by GDP dissociation inhibitors (GDIs). The small GTPases Rab are key regulators of intracellular membrane trafficking, from the formation of transport vesicles to their fusion with membranes. Rabs cycle between an inactive GDP-bound form and an active GTP-bound form that is able to recruit to membranes different set of downstream effectors directly responsible for vesicle formation, movement, tethering and fusion. Plays a role in the initial events of the autophagic vacuole development which take place at specialized regions of the endoplasmic reticulum. Regulates vesicular transport between the endoplasmic reticulum and successive Golgi compartments. Required to modulate the compacted morphology of the Golgi. Promotes the recruitment of lipid phosphatase MTMR6 to the endoplasmic reticulum-Golgi intermediate compartment. The protein is Ras-related protein Rab-1B (Rab1b) of Mus musculus (Mouse).